Here is a 142-residue protein sequence, read N- to C-terminus: Cytochrome b5-related protein (142 aa).

The 85-residue stretch at 16–100 folds into the Cytochrome b5 heme-binding domain; sequence PTYRNSAPVT…IAKYKVRDAY (85 aa). Heme-binding residues include His59 and His82.

It belongs to the cytochrome b5 family.

Functionally, may play a role in muscle cell metabolism. The chain is Cytochrome b5-related protein (Cyt-b5-r) from Drosophila virilis (Fruit fly).